The sequence spans 356 residues: tRNA N6-adenosine threonylcarbamoyltransferase (356 aa).

Fe cation is bound by residues H115 and H119. Substrate-binding positions include 138-142 (LVSGG), D171, G184, and N283. A Fe cation-binding site is contributed by D311.

It belongs to the KAE1 / TsaD family. It depends on Fe(2+) as a cofactor.

The protein localises to the cytoplasm. The enzyme catalyses L-threonylcarbamoyladenylate + adenosine(37) in tRNA = N(6)-L-threonylcarbamoyladenosine(37) in tRNA + AMP + H(+). Functionally, required for the formation of a threonylcarbamoyl group on adenosine at position 37 (t(6)A37) in tRNAs that read codons beginning with adenine. Is involved in the transfer of the threonylcarbamoyl moiety of threonylcarbamoyl-AMP (TC-AMP) to the N6 group of A37, together with TsaE and TsaB. TsaD likely plays a direct catalytic role in this reaction. The polypeptide is tRNA N6-adenosine threonylcarbamoyltransferase (Prochlorococcus marinus (strain MIT 9301)).